A 142-amino-acid chain; its full sequence is Hemoglobin subunit alpha-1 (142 aa).

An N-acetylserine modification is found at serine 1. Positions 1-142 (SLSDKDKAAV…VALALAQRYR (142 aa)) constitute a Globin domain. Histidine 59 lines the O2 pocket. Residue histidine 88 coordinates heme b.

The protein belongs to the globin family. In terms of assembly, hb1 is a heterotetramer of two alpha-2 chains and two beta chains. As to expression, red blood cells.

Its function is as follows. Involved in oxygen transport from gills to the various peripheral tissues. The chain is Hemoglobin subunit alpha-1 (hba1) from Notothenia neglecta (Yellowbelly rockcod).